We begin with the raw amino-acid sequence, 179 residues long: Large ribosomal subunit protein uL5 (179 aa).

It belongs to the universal ribosomal protein uL5 family. As to quaternary structure, part of the 50S ribosomal subunit; part of the 5S rRNA/L5/L18/L25 subcomplex. Contacts the 5S rRNA and the P site tRNA. Forms a bridge to the 30S subunit in the 70S ribosome.

In terms of biological role, this is one of the proteins that bind and probably mediate the attachment of the 5S RNA into the large ribosomal subunit, where it forms part of the central protuberance. In the 70S ribosome it contacts protein S13 of the 30S subunit (bridge B1b), connecting the 2 subunits; this bridge is implicated in subunit movement. Contacts the P site tRNA; the 5S rRNA and some of its associated proteins might help stabilize positioning of ribosome-bound tRNAs. The sequence is that of Large ribosomal subunit protein uL5 from Xylella fastidiosa (strain M12).